We begin with the raw amino-acid sequence, 657 residues long: MLNQNNQELFKPSKEFSRNARIKNLCEYYDLCDEAKEDFEGFWKRQALEKIEWFSPFSRVLNEDKAPFYKWFEGGTLNVSYQCLDRHMKTRRNKAALIFEGEMGDYEVYTYRRLLHETCKAANLLKKFGVKKGDRVVIYMPMIPETAIVMLACARIGAIHSVVFGGFSPEALRDRIIDAGAKLVVTADGAFRRGKPYMLKPAVDKALSEGCESVEKVLIVIRNNEPIEYIKGRDYVYNELVKNESYKCEPEIMDSEDLLFLLYTSGSTGKPKGVMHASAGYILWAQMTMEWVFDIKDYDNYWCSADVGWITGHTYVVYGPLACGATTIMHEGTPTYPNSGRWWRMIEEYQISKFYTSPTAIRMLHADAPDEPRKYDLSTLEVLGTVGEPINPSAWKWFYDEIGGTKSPIVDTWWQTETGGHMITPLPGATPLKPGCATLPLPGIFAEVIDEEGNKKDEGEDGLLCITKPWPSMIRGIWGNDERYIESYFSQAKKDGKAVYFSGDGAFYDKNGYITITGRTDDVVNVAGHRIGTAEIESAIAKHPSVAESAVVSILDAIKGESLFAFVVLSPASSCDLGGAIETLKELNDILRVEIGPIAKIEKILYTPGLPKTRSGKIMRRILRTIARGEEIKQDISTLEDSGVVETIVKLAKAEFE.

Residues 192–195 and T311 each bind CoA; that span reads RRGK. Residues 387 to 389, 411 to 416, D504, R519, and R530 each bind ATP; these read GEP and DTWWQT. Mg(2+)-binding residues include H543 and V546. A CoA-binding site is contributed by R592. K617 bears the N6-acetyllysine mark.

The protein belongs to the ATP-dependent AMP-binding enzyme family. Mg(2+) serves as cofactor. Post-translationally, acetylated. Deacetylation by the SIR2-homolog deacetylase activates the enzyme.

The enzyme catalyses acetate + ATP + CoA = acetyl-CoA + AMP + diphosphate. Catalyzes the conversion of acetate into acetyl-CoA (AcCoA), an essential intermediate at the junction of anabolic and catabolic pathways. AcsA undergoes a two-step reaction. In the first half reaction, AcsA combines acetate with ATP to form acetyl-adenylate (AcAMP) intermediate. In the second half reaction, it can then transfer the acetyl group from AcAMP to the sulfhydryl group of CoA, forming the product AcCoA. The chain is Acetyl-coenzyme A synthetase from Campylobacter jejuni subsp. jejuni serotype O:6 (strain 81116 / NCTC 11828).